A 126-amino-acid chain; its full sequence is Non-specific lipid-transfer protein 15 (126 aa).

An N-terminal signal peptide occupies residues 1–22 (MSKSIFVVCITLLVVLSPTLNA). 4 disulfides stabilise this stretch: cysteine 34-cysteine 80, cysteine 45-cysteine 57, cysteine 58-cysteine 100, and cysteine 78-cysteine 114.

The protein belongs to the plant LTP family.

In terms of biological role, plant non-specific lipid-transfer proteins transfer phospholipids as well as galactolipids across membranes. May play a role in wax or cutin deposition in the cell walls of expanding epidermal cells and certain secretory tissues. The sequence is that of Non-specific lipid-transfer protein 15 (LTP15) from Arabidopsis thaliana (Mouse-ear cress).